A 381-amino-acid polypeptide reads, in one-letter code: Alpha-methylacyl-CoA racemase (381 aa).

Substrate contacts are provided by residues Arg36 and 54-57 (LDLK). Lys57 is modified (N6-acetyllysine). N6-acetyllysine; alternate occurs at positions 86 and 100. An N6-succinyllysine; alternate mark is found at Lys86 and Lys100. An N6-acetyllysine modification is found at Lys117. A substrate-binding site is contributed by 120-125 (GHDINY). The active-site Proton acceptor is His121. Asp151 (proton donor) is an active-site residue. Residue Lys267 is modified to N6-succinyllysine. The disordered stretch occupies residues 316-344 (TDGEQLPSPRPAPLLSRTPAVPSAKRDPS). The Microbody targeting signal signature appears at 379–381 (ANL).

It belongs to the CoA-transferase III family. Monomer.

It localises to the peroxisome. Its subcellular location is the mitochondrion. The enzyme catalyses a (2S)-2-methylacyl-CoA = a (2R)-2-methylacyl-CoA. It catalyses the reaction (25R)-3alpha,7alpha,12alpha-trihydroxy-5beta-cholestan-26-oyl-CoA = (25S)-3alpha,7alpha,12alpha-trihydroxy-5beta-cholestan-26-oyl-CoA. It carries out the reaction (2R,6)-dimethylheptanoyl-CoA = (2S,6)-dimethylheptanoyl-CoA. The protein operates within lipid metabolism; bile acid biosynthesis. Its pathway is lipid metabolism; fatty acid metabolism. In terms of biological role, catalyzes the interconversion of (R)- and (S)-stereoisomers of alpha-methyl-branched-chain fatty acyl-CoA esters. Acts only on coenzyme A thioesters, not on free fatty acids, and accepts as substrates a wide range of alpha-methylacyl-CoAs, including pristanoyl-CoA, trihydroxycoprostanoyl-CoA (an intermediate in bile acid synthesis), and arylpropionic acids like the anti-inflammatory drug ibuprofen (2-(4-isobutylphenyl)propionic acid) but neither 3-methyl-branched nor linear-chain acyl-CoAs. This is Alpha-methylacyl-CoA racemase (Amacr) from Mus musculus (Mouse).